A 222-amino-acid chain; its full sequence is Probable transaldolase 2 (222 aa).

The active-site Schiff-base intermediate with substrate is Lys-90.

Belongs to the transaldolase family. Type 3B subfamily.

The protein resides in the cytoplasm. It catalyses the reaction D-sedoheptulose 7-phosphate + D-glyceraldehyde 3-phosphate = D-erythrose 4-phosphate + beta-D-fructose 6-phosphate. Its pathway is carbohydrate degradation; pentose phosphate pathway; D-glyceraldehyde 3-phosphate and beta-D-fructose 6-phosphate from D-ribose 5-phosphate and D-xylulose 5-phosphate (non-oxidative stage): step 2/3. Functionally, transaldolase is important for the balance of metabolites in the pentose-phosphate pathway. The chain is Probable transaldolase 2 from Bacillus anthracis.